A 129-amino-acid chain; its full sequence is Large ribosomal subunit protein bL19 (129 aa).

This sequence belongs to the bacterial ribosomal protein bL19 family.

Its function is as follows. This protein is located at the 30S-50S ribosomal subunit interface and may play a role in the structure and function of the aminoacyl-tRNA binding site. The sequence is that of Large ribosomal subunit protein bL19 from Bordetella avium (strain 197N).